Reading from the N-terminus, the 618-residue chain is Camphene synthase, chloroplastic (618 aa).

The N-terminal 51 residues, 1–51, are a transit peptide targeting the chloroplast; it reads MALLSITPLVSRSCLSSSHEIKALRRTIPTLGICRPGKSVAHSINMCLTSV. 3 residues coordinate Mg(2+): aspartate 369, aspartate 373, and aspartate 521. Positions 369–373 match the DDXXD motif motif; that stretch reads DDMYD.

It belongs to the terpene synthase family. Tpsd subfamily. It depends on Mg(2+) as a cofactor. The cofactor is Mn(2+). Requires K(+) as cofactor.

The protein resides in the plastid. It localises to the chloroplast. It carries out the reaction (2E)-geranyl diphosphate = (1S,4R)-camphene + diphosphate. The protein operates within terpene metabolism; oleoresin biosynthesis. Involved in defensive oleoresin formation in conifers in response to insect attack or other injury. Involved in monoterpene (C10) olefins biosynthesis. This is Camphene synthase, chloroplastic (ag6) from Abies grandis (Grand fir).